The chain runs to 68 residues: Antimicrobial peptide VpCT3 (68 aa).

Positions 1 to 23 are cleaved as a signal peptide; it reads MKTQIVILIVAVLVLQLVSQSDA. Leu36 is subject to Leucine amide. Positions 37–68 are excised as a propeptide; sequence GKRGLKNLDQYNDLFDGEISDADIKFLQDLMR.

It belongs to the non-disulfide-bridged peptide (NDBP) superfamily. Short antimicrobial peptide (group 4) family. In terms of tissue distribution, expressed by the venom gland.

It localises to the secreted. The protein resides in the target cell membrane. Antimicrobial peptide with weak activity against all bacteria tested (MIC&gt;100 uM) and all yeasts tested (MIC&gt;200 uM). Also provokes weak hemolysis on human erythrocytes (HC(50)=83.7 uM). This is Antimicrobial peptide VpCT3 from Mesomexovis punctatus (Scorpion).